A 198-amino-acid polypeptide reads, in one-letter code: MDTLAPESTRQNLRSQRLNLLTNEPHQRLESLVKSKEPFASRDNFARFVAAQYLFQHDLEPLYRNEALARLFPGLASRARDDAARADLADLGHPVPEGDQSVREADLSLAEALGWLFVSEGSKLGAAFLFKKAAALELDENFGARHLAEPEGGRAQGWKSFVAILDGIELNEEEERLAAKGASDAFNRFGDLLERTFA.

Heme b is bound at residue histidine 26.

Belongs to the heme oxygenase family.

The catalysed reaction is heme b + 3 AH2 + 3 O2 + 2 H(+) = biliverdin IXbeta + CO + Fe(2+) + 3 A + 3 H2O. The enzyme catalyses heme b + 3 AH2 + 3 O2 + 3 H(+) = biliverdin IXdelta + CO + Fe(2+) + 3 A + 3 H2O. Its function is as follows. Involved in heme degradation. Catalyzes the degradation of heme to biliverdin, with the release of iron. Forms biliverdin delta (70%) and beta (30%). Under anaerobic conditions ferredoxin--NADP(+) reductase (fpr) can provide the necessary electrons; Bfd is not required. This Pseudomonas aeruginosa (strain ATCC 15692 / DSM 22644 / CIP 104116 / JCM 14847 / LMG 12228 / 1C / PRS 101 / PAO1) protein is Heme oxygenase PigA.